The chain runs to 426 residues: Maintenance of mitochondrial morphology protein 1 (426 aa).

Residues 1–100 lie on the Lumenal side of the membrane; the sequence is MTDSENESTE…KFSGWSFAQG (100 aa). A helical transmembrane segment spans residues 101 to 121; it reads FFVGQLSIVLLFIFFLKFFIF. The Cytoplasmic segment spans residues 122–426; the sequence is SDEPSKSKNP…NTREEKPTEL (305 aa). Positions 194-409 constitute an SMP-LTD domain; the sequence is PAESLDWFNV…EPRFQFVRLP (216 aa).

It belongs to the MMM1 family. In terms of assembly, homodimer. Component of the ER-mitochondria encounter structure (ERMES) or MDM complex, composed of MMM1, MDM10, MDM12 and MDM34. An MMM1 homodimer associates with one molecule of MDM12 on each side in a pairwise head-to-tail manner, and the SMP-LTD domains of MMM1 and MDM12 generate a continuous hydrophobic tunnel for phospholipid trafficking.

It localises to the endoplasmic reticulum membrane. Functionally, component of the ERMES/MDM complex, which serves as a molecular tether to connect the endoplasmic reticulum (ER) and mitochondria. Components of this complex are involved in the control of mitochondrial shape and protein biogenesis, and function in nonvesicular lipid trafficking between the ER and mitochondria. The MDM12-MMM1 subcomplex functions in the major beta-barrel assembly pathway that is responsible for biogenesis of all outer membrane beta-barrel proteins, and acts in a late step after the SAM complex. The MDM10-MDM12-MMM1 subcomplex further acts in the TOM40-specific pathway after the action of the MDM12-MMM1 complex. Essential for establishing and maintaining the structure of mitochondria and maintenance of mtDNA nucleoids. The sequence is that of Maintenance of mitochondrial morphology protein 1 from Saccharomyces cerevisiae (strain AWRI1631) (Baker's yeast).